A 202-amino-acid chain; its full sequence is Small ribosomal subunit protein uS4 (202 aa).

The interval 22–43 is disordered; it reads TRKNARRAYPPGQHGQNRRKRS. The region spanning 90–152 is the S4 RNA-binding domain; sequence MRLDNTVFRL…DKSRKLVQAN (63 aa).

Belongs to the universal ribosomal protein uS4 family. In terms of assembly, part of the 30S ribosomal subunit. Contacts protein S5. The interaction surface between S4 and S5 is involved in control of translational fidelity.

Functionally, one of the primary rRNA binding proteins, it binds directly to 16S rRNA where it nucleates assembly of the body of the 30S subunit. In terms of biological role, with S5 and S12 plays an important role in translational accuracy. This Gloeothece citriformis (strain PCC 7424) (Cyanothece sp. (strain PCC 7424)) protein is Small ribosomal subunit protein uS4.